The following is a 329-amino-acid chain: Isopenicillin N synthase (329 aa).

Isopenicillin N is bound by residues R87, Y91, and Y189. R87, Y91, Y189, H212, and D214 together coordinate N-[(5S)-5-amino-5-carboxypentanoyl]-L-cysteinyl-D-valine. Positions 180–286 constitute a Fe2OG dioxygenase domain; sequence TLSAVTLIHY…RLSLPFFLHA (107 aa). Fe(2+)-binding residues include H212, D214, and H268. R277 is a 2-oxoglutarate binding site. S279 lines the isopenicillin N pocket. S279 lines the N-[(5S)-5-amino-5-carboxypentanoyl]-L-cysteinyl-D-valine pocket.

Belongs to the iron/ascorbate-dependent oxidoreductase family. Fe cation is required as a cofactor. Requires L-ascorbate as cofactor.

It carries out the reaction N-[(5S)-5-amino-5-carboxypentanoyl]-L-cysteinyl-D-valine + O2 = isopenicillin N + 2 H2O. Its pathway is antibiotic biosynthesis; penicillin G biosynthesis; penicillin G from L-alpha-aminoadipate and L-cysteine and L-valine: step 2/3. In terms of biological role, removes, in the presence of oxygen, 4 hydrogen atoms from delta-L-(alpha-aminoadipyl)-L-cysteinyl-D-valine (ACV) to form the azetidinone and thiazolidine rings of isopenicillin. The chain is Isopenicillin N synthase (pcbC) from Streptomyces griseus.